A 343-amino-acid chain; its full sequence is Cilia- and flagella-associated protein 36 (343 aa).

Ser-85 and Ser-147 each carry phosphoserine. Positions 147 to 187 form a coiled coil; the sequence is SDLEQEEMKILREVLRKSKEEYDQEEERKRKKQSSEAKMEE. The interval 165-188 is disordered; that stretch reads KEEYDQEEERKRKKQSSEAKMEEL. A Phosphoserine modification is found at Ser-201. 2 stretches are compositionally biased toward basic and acidic residues: residues 279–293 and 301–323; these read QKRD…DTRT and QKGK…AEEK. The disordered stretch occupies residues 279 to 323; the sequence is QKRDKLLSMRKDTRTKQIQNTEQKGKPTREAEEMTEKPEMTAEEK.

It belongs to the CFAP36 family. In terms of assembly, interacts with ARL3.

The protein resides in the nucleus. It localises to the cytoplasm. It is found in the cell projection. The protein localises to the cilium. Its subcellular location is the flagellum. May act as an effector for ARL3. In Mus musculus (Mouse), this protein is Cilia- and flagella-associated protein 36.